The sequence spans 428 residues: Cytochrome P450-terp (428 aa).

Cys377 lines the heme pocket.

The protein belongs to the cytochrome P450 family. Requires heme as cofactor.

The protein localises to the cytoplasm. Catalyzes the hydroxylation of alpha-terpineol. The chain is Cytochrome P450-terp (cyp108) from Pseudomonas sp.